A 707-amino-acid polypeptide reads, in one-letter code: Elongation factor G (707 aa).

The tr-type G domain occupies 8–297 (ERVRNIGIAA…AVVDYLPSPV (290 aa)). Residues 17–24 (AHIDAGKT), 96–100 (DTPGH), and 150–153 (NKMD) each bind GTP.

Belongs to the TRAFAC class translation factor GTPase superfamily. Classic translation factor GTPase family. EF-G/EF-2 subfamily.

Its subcellular location is the cytoplasm. Functionally, catalyzes the GTP-dependent ribosomal translocation step during translation elongation. During this step, the ribosome changes from the pre-translocational (PRE) to the post-translocational (POST) state as the newly formed A-site-bound peptidyl-tRNA and P-site-bound deacylated tRNA move to the P and E sites, respectively. Catalyzes the coordinated movement of the two tRNA molecules, the mRNA and conformational changes in the ribosome. This Synechococcus sp. (strain JA-2-3B'a(2-13)) (Cyanobacteria bacterium Yellowstone B-Prime) protein is Elongation factor G.